The following is a 137-amino-acid chain: Nucleoside diphosphate kinase (137 aa).

Residues K9, F57, R85, T91, R102, and N112 each coordinate ATP. Catalysis depends on H115, which acts as the Pros-phosphohistidine intermediate.

It belongs to the NDK family. In terms of assembly, homotetramer. Mg(2+) is required as a cofactor.

It is found in the cytoplasm. The enzyme catalyses a 2'-deoxyribonucleoside 5'-diphosphate + ATP = a 2'-deoxyribonucleoside 5'-triphosphate + ADP. The catalysed reaction is a ribonucleoside 5'-diphosphate + ATP = a ribonucleoside 5'-triphosphate + ADP. Its function is as follows. Major role in the synthesis of nucleoside triphosphates other than ATP. The ATP gamma phosphate is transferred to the NDP beta phosphate via a ping-pong mechanism, using a phosphorylated active-site intermediate. This Campylobacter jejuni subsp. jejuni serotype O:6 (strain 81116 / NCTC 11828) protein is Nucleoside diphosphate kinase.